The chain runs to 439 residues: GTPase Obg (439 aa).

Residues 1–159 (MAFVDQAEIE…RKLKLELKVL (159 aa)) enclose the Obg domain. Positions 160 to 336 (ADVGLVGFPS…LMRLTADLLA (177 aa)) constitute an OBG-type G domain. Residues 166 to 173 (GFPSAGKS), 191 to 195 (FTTLS), 213 to 216 (DLPG), 283 to 286 (TKMD), and 317 to 319 (SAL) contribute to the GTP site. Mg(2+) is bound by residues Ser173 and Thr193. Positions 358–439 (DFKPEQHNFT…NSDFVFEFSD (82 aa)) constitute an OCT domain.

This sequence belongs to the TRAFAC class OBG-HflX-like GTPase superfamily. OBG GTPase family. In terms of assembly, monomer. It depends on Mg(2+) as a cofactor.

Its subcellular location is the cytoplasm. Functionally, an essential GTPase which binds GTP, GDP and possibly (p)ppGpp with moderate affinity, with high nucleotide exchange rates and a fairly low GTP hydrolysis rate. Plays a role in control of the cell cycle, stress response, ribosome biogenesis and in those bacteria that undergo differentiation, in morphogenesis control. This is GTPase Obg from Leuconostoc citreum (strain KM20).